A 362-amino-acid polypeptide reads, in one-letter code: Phosphoserine aminotransferase (362 aa).

The L-glutamate site is built by Ser9 and Arg42. Residues 76 to 77, Trp102, Thr153, Asp174, and Gln197 each bind pyridoxal 5'-phosphate; that span reads GR. N6-(pyridoxal phosphate)lysine is present on Lys198. Residue 239–240 coordinates pyridoxal 5'-phosphate; the sequence is NT.

This sequence belongs to the class-V pyridoxal-phosphate-dependent aminotransferase family. SerC subfamily. In terms of assembly, homodimer. Pyridoxal 5'-phosphate is required as a cofactor.

The protein localises to the cytoplasm. The enzyme catalyses O-phospho-L-serine + 2-oxoglutarate = 3-phosphooxypyruvate + L-glutamate. It catalyses the reaction 4-(phosphooxy)-L-threonine + 2-oxoglutarate = (R)-3-hydroxy-2-oxo-4-phosphooxybutanoate + L-glutamate. It functions in the pathway amino-acid biosynthesis; L-serine biosynthesis; L-serine from 3-phospho-D-glycerate: step 2/3. Its pathway is cofactor biosynthesis; pyridoxine 5'-phosphate biosynthesis; pyridoxine 5'-phosphate from D-erythrose 4-phosphate: step 3/5. Its function is as follows. Catalyzes the reversible conversion of 3-phosphohydroxypyruvate to phosphoserine and of 3-hydroxy-2-oxo-4-phosphonooxybutanoate to phosphohydroxythreonine. The polypeptide is Phosphoserine aminotransferase (Salmonella newport (strain SL254)).